An 83-amino-acid polypeptide reads, in one-letter code: Putative protein T-ENOL (83 aa).

The segment at Met1–Arg33 is disordered.

The chain is Putative protein T-ENOL from Homo sapiens (Human).